The chain runs to 494 residues: Glycogen synthase (494 aa).

Residue Lys-15 coordinates ADP-alpha-D-glucose.

Belongs to the glycosyltransferase 1 family. Bacterial/plant glycogen synthase subfamily.

The catalysed reaction is [(1-&gt;4)-alpha-D-glucosyl](n) + ADP-alpha-D-glucose = [(1-&gt;4)-alpha-D-glucosyl](n+1) + ADP + H(+). It functions in the pathway glycan biosynthesis; glycogen biosynthesis. Synthesizes alpha-1,4-glucan chains using ADP-glucose. In Albidiferax ferrireducens (strain ATCC BAA-621 / DSM 15236 / T118) (Rhodoferax ferrireducens), this protein is Glycogen synthase.